The primary structure comprises 652 residues: Acetyl-coenzyme A synthetase (652 aa).

Residues 189–192 (RGGK) and threonine 311 contribute to the CoA site. ATP contacts are provided by residues 387–389 (GEP), 411–416 (DTWWQT), aspartate 500, and arginine 515. CoA is bound at residue serine 523. Arginine 526 contacts ATP. The Mg(2+) site is built by valine 537, histidine 539, and valine 542. Residue arginine 584 participates in CoA binding. Lysine 609 is modified (N6-acetyllysine).

This sequence belongs to the ATP-dependent AMP-binding enzyme family. Requires Mg(2+) as cofactor. Acetylated. Deacetylation by the SIR2-homolog deacetylase activates the enzyme.

The enzyme catalyses acetate + ATP + CoA = acetyl-CoA + AMP + diphosphate. Functionally, catalyzes the conversion of acetate into acetyl-CoA (AcCoA), an essential intermediate at the junction of anabolic and catabolic pathways. AcsA undergoes a two-step reaction. In the first half reaction, AcsA combines acetate with ATP to form acetyl-adenylate (AcAMP) intermediate. In the second half reaction, it can then transfer the acetyl group from AcAMP to the sulfhydryl group of CoA, forming the product AcCoA. This is Acetyl-coenzyme A synthetase from Bartonella henselae (strain ATCC 49882 / DSM 28221 / CCUG 30454 / Houston 1) (Rochalimaea henselae).